The chain runs to 483 residues: Glutamyl-tRNA(Gln) amidotransferase subunit A (483 aa).

Catalysis depends on charge relay system residues Lys76 and Ser151. Ser175 serves as the catalytic Acyl-ester intermediate.

It belongs to the amidase family. GatA subfamily. In terms of assembly, heterotrimer of A, B and C subunits.

The catalysed reaction is L-glutamyl-tRNA(Gln) + L-glutamine + ATP + H2O = L-glutaminyl-tRNA(Gln) + L-glutamate + ADP + phosphate + H(+). In terms of biological role, allows the formation of correctly charged Gln-tRNA(Gln) through the transamidation of misacylated Glu-tRNA(Gln) in organisms which lack glutaminyl-tRNA synthetase. The reaction takes place in the presence of glutamine and ATP through an activated gamma-phospho-Glu-tRNA(Gln). In Pseudomonas entomophila (strain L48), this protein is Glutamyl-tRNA(Gln) amidotransferase subunit A.